The sequence spans 198 residues: Holliday junction branch migration complex subunit RuvA (198 aa).

Residues 1 to 63 (MYDYIKGQLT…EDAHLLFGFH (63 aa)) form a domain I region. Residues 64 to 142 (TEDEKDVFLK…EAPQETGNTK (79 aa)) are domain II. Residues 143–147 (ARSNK) are flexible linker. The domain III stretch occupies residues 148-198 (AGNTQLDEAIEALLALGYKAAELKKIRAFFEGTSETAEQYIKSALKLLMKG).

It belongs to the RuvA family. In terms of assembly, homotetramer. Forms an RuvA(8)-RuvB(12)-Holliday junction (HJ) complex. HJ DNA is sandwiched between 2 RuvA tetramers; dsDNA enters through RuvA and exits via RuvB. An RuvB hexamer assembles on each DNA strand where it exits the tetramer. Each RuvB hexamer is contacted by two RuvA subunits (via domain III) on 2 adjacent RuvB subunits; this complex drives branch migration. In the full resolvosome a probable DNA-RuvA(4)-RuvB(12)-RuvC(2) complex forms which resolves the HJ.

The protein localises to the cytoplasm. Functionally, the RuvA-RuvB-RuvC complex processes Holliday junction (HJ) DNA during genetic recombination and DNA repair, while the RuvA-RuvB complex plays an important role in the rescue of blocked DNA replication forks via replication fork reversal (RFR). RuvA specifically binds to HJ cruciform DNA, conferring on it an open structure. The RuvB hexamer acts as an ATP-dependent pump, pulling dsDNA into and through the RuvAB complex. HJ branch migration allows RuvC to scan DNA until it finds its consensus sequence, where it cleaves and resolves the cruciform DNA. This is Holliday junction branch migration complex subunit RuvA from Streptococcus pyogenes serotype M28 (strain MGAS6180).